Reading from the N-terminus, the 185-residue chain is Photosystem I assembly protein Ycf4 (185 aa).

2 helical membrane-spanning segments follow: residues 24-44 and 58-78; these read YIIG…SISS and ALLF…ANLL.

Belongs to the Ycf4 family.

The protein resides in the cellular thylakoid membrane. Seems to be required for the assembly of the photosystem I complex. In Prochlorococcus marinus (strain MIT 9215), this protein is Photosystem I assembly protein Ycf4.